The sequence spans 728 residues: MSDRIDRDVINALIAGHFSDPFSVLGMHPTEAGVEVRALLPDATEVWVIEPKTGRKVGKLECLDSRGFFSGVIPRRKNIFRYQLAVLWHGQENLIDDPYSFGPLIQEMDAWLLSEGTHLRPYETLGAHADTMDGITGTRFSVWAPNAQRVSVVGQFNYWDGRRHPMRLRRESGIWELFIPGAHNGQLYKFEMIDAHGKLRVKADPYAFEAQMRPATASLICGLPEKVVQSEERKQANNFDAPISIYEVHLGSWRRHTDNNFWLSYRELADQLVPYAKWMGFTHIELLPINEHPFDGSWGYQPTGLYAPTRRFGTRDDFRYFINAAHAAGLSVILDWVPGHFPSDDFGLSEFDGTDLYEHSDPREGYHQDWNTLIYNYGRREVANYLVGNALYWIERFGIDALRVDAVASMIYRDYSRKEGEWIPNEYGGRENLEAIEFLRNTNRILGEQVPGAVTMAEESTDFPGVSRPPSMGGLGFWYKWNLGWMHDTLDYFKLDPVFRKYHHDKLTFGMLYNNTENFVLPLSHDEVVHGKKSILDRMPGDAWQKFANLRAYYGWMFAFPGKKLLFMGNEFAQGREWNHDSSLDWHLLEGGDNWHHGVQRLVRDLNLTYRHHKALHEMDFDSYGFEWLVVDDHERSVFVFVRRDSAGNEIIVASNFTPVPRPHYRFGINQPGKWREILNTDSSHYHGSNAGNAGAVQSDEHESHGRPHSLSLTLPPLSTIWLVREGE.

Aspartate 405 acts as the Nucleophile in catalysis. Glutamate 458 (proton donor) is an active-site residue. Positions 686 to 712 are disordered; sequence YHGSNAGNAGAVQSDEHESHGRPHSLS.

It belongs to the glycosyl hydrolase 13 family. GlgB subfamily. As to quaternary structure, monomer.

The enzyme catalyses Transfers a segment of a (1-&gt;4)-alpha-D-glucan chain to a primary hydroxy group in a similar glucan chain.. The protein operates within glycan biosynthesis; glycogen biosynthesis. Functionally, catalyzes the formation of the alpha-1,6-glucosidic linkages in glycogen by scission of a 1,4-alpha-linked oligosaccharide from growing alpha-1,4-glucan chains and the subsequent attachment of the oligosaccharide to the alpha-1,6 position. This chain is 1,4-alpha-glucan branching enzyme GlgB, found in Enterobacter sp. (strain 638).